We begin with the raw amino-acid sequence, 126 residues long: Ribosome-binding factor A (126 aa).

Belongs to the RbfA family. Monomer. Binds 30S ribosomal subunits, but not 50S ribosomal subunits or 70S ribosomes.

It localises to the cytoplasm. One of several proteins that assist in the late maturation steps of the functional core of the 30S ribosomal subunit. Associates with free 30S ribosomal subunits (but not with 30S subunits that are part of 70S ribosomes or polysomes). Required for efficient processing of 16S rRNA. May interact with the 5'-terminal helix region of 16S rRNA. This Geobacillus sp. (strain WCH70) protein is Ribosome-binding factor A.